The following is a 413-amino-acid chain: Serine/threonine transporter SstT (413 aa).

Transmembrane regions (helical) follow at residues 19-39 (IFIGLILGLLVALVTPTLQNV), 61-81 (AVAPILIFVLVMAAIANKKIG), 89-109 (IIVLYLLGTFLAALSAVIAGF), 148-168 (ALFKANFVGVLAWSIGLGLAL), 189-209 (IVYVIIAFAPIGVFGLVSETL), 223-243 (LLAVLVGTMLFVAFVVNPILV), 297-317 (IPLGATINMAGAAITVTILTL), and 325-345 (IQISFFSALLLSVVASICACG).

It belongs to the dicarboxylate/amino acid:cation symporter (DAACS) (TC 2.A.23) family.

It is found in the cell inner membrane. It catalyses the reaction L-serine(in) + Na(+)(in) = L-serine(out) + Na(+)(out). It carries out the reaction L-threonine(in) + Na(+)(in) = L-threonine(out) + Na(+)(out). In terms of biological role, involved in the import of serine and threonine into the cell, with the concomitant import of sodium (symport system). This chain is Serine/threonine transporter SstT, found in Pasteurella multocida (strain Pm70).